We begin with the raw amino-acid sequence, 138 residues long: Acidic phospholipase A2 Tbo-E6 (138 aa).

The N-terminal stretch at Met1–Gly16 is a signal peptide. Disulfide bonds link Cys42-Cys131, Cys44-Cys60, Cys59-Cys111, Cys65-Cys138, Cys66-Cys104, Cys73-Cys97, and Cys91-Cys102. Ca(2+) contacts are provided by Tyr43, Gly45, and Gly47. The active site involves His63. Asp64 lines the Ca(2+) pocket. The active site involves Asp105.

In terms of assembly, monomer. The cofactor is Ca(2+). In terms of tissue distribution, expressed by the venom gland.

The protein localises to the secreted. The catalysed reaction is a 1,2-diacyl-sn-glycero-3-phosphocholine + H2O = a 1-acyl-sn-glycero-3-phosphocholine + a fatty acid + H(+). In terms of biological role, snake venom phospholipase A2 (PLA2) that impairs hemostasis. It weakly inhibits ADP-induced platelet aggregation when tested on platelet rich plasma from human and rabbit blood (15-25% of inhibition at 5-10 ug of enzyme), and dose-dependently inhibits blood coagulation, possibly by inhibiting thrombin activation. Exhibits high hydrolytic activities toward L-dipalmitoyl phosphatidylcholine. PLA2 catalyzes the calcium-dependent hydrolysis of the 2-acyl groups in 3-sn-phosphoglycerides. The sequence is that of Acidic phospholipase A2 Tbo-E6 from Craspedocephalus borneensis (Borneo pit viper).